The chain runs to 702 residues: Ribosomal RNA large subunit methyltransferase K/L (702 aa).

The THUMP domain maps to Leu43 to Leu154.

It belongs to the methyltransferase superfamily. RlmKL family.

The protein localises to the cytoplasm. The enzyme catalyses guanosine(2445) in 23S rRNA + S-adenosyl-L-methionine = N(2)-methylguanosine(2445) in 23S rRNA + S-adenosyl-L-homocysteine + H(+). It catalyses the reaction guanosine(2069) in 23S rRNA + S-adenosyl-L-methionine = N(2)-methylguanosine(2069) in 23S rRNA + S-adenosyl-L-homocysteine + H(+). In terms of biological role, specifically methylates the guanine in position 2445 (m2G2445) and the guanine in position 2069 (m7G2069) of 23S rRNA. The chain is Ribosomal RNA large subunit methyltransferase K/L from Salmonella choleraesuis (strain SC-B67).